The following is a 473-amino-acid chain: Ribulose bisphosphate carboxylase large chain (473 aa).

The substrate site is built by Asn-116 and Thr-166. The Proton acceptor role is filled by Lys-168. A substrate-binding site is contributed by Lys-170. Residues Lys-194, Asp-196, and Glu-197 each contribute to the Mg(2+) site. N6-carboxylysine is present on Lys-194. His-287 acts as the Proton acceptor in catalysis. Positions 288, 320, and 372 each coordinate substrate.

Belongs to the RuBisCO large chain family. Type I subfamily. Heterohexadecamer of 8 large chains and 8 small chains. Mg(2+) serves as cofactor.

The catalysed reaction is 2 (2R)-3-phosphoglycerate + 2 H(+) = D-ribulose 1,5-bisphosphate + CO2 + H2O. The enzyme catalyses D-ribulose 1,5-bisphosphate + O2 = 2-phosphoglycolate + (2R)-3-phosphoglycerate + 2 H(+). Its function is as follows. RuBisCO catalyzes two reactions: the carboxylation of D-ribulose 1,5-bisphosphate, the primary event in carbon dioxide fixation, as well as the oxidative fragmentation of the pentose substrate. Both reactions occur simultaneously and in competition at the same active site. The polypeptide is Ribulose bisphosphate carboxylase large chain (Nitrosomonas europaea (strain ATCC 19718 / CIP 103999 / KCTC 2705 / NBRC 14298)).